A 217-amino-acid polypeptide reads, in one-letter code: Lipid transferase CIDEA (217 aa).

The CIDE-N domain maps to 33-110; that stretch reads PARPFRVSNH…ILEKGQKWTP (78 aa). The amphipathic helix stretch occupies residues 163–180; the sequence is CTSFKAVLRNLLRFMSYA.

This sequence belongs to the CIDE family. As to quaternary structure, homodimer. Interacts with CIDEC. Directly interacts with CEBPB. Interacts with isoform CLSTN3beta of CLSTN3; inhibiting the lipid transferase activity of CIDEA. In terms of tissue distribution, highly expressed in brown adipose tissue and, at lower levels, in white adipose tissue (at protein level). Undetectable in undifferentiated preadipocytes. Expressed in mammary gland during pregnancy and lactation, in epithelial cells, but not in the surrounding adipose tissue. Secreted into milk via milk fat globules.

The protein resides in the lipid droplet. It localises to the nucleus. The enzyme catalyses a triacyl-sn-glycerol(in) = a triacyl-sn-glycerol(out). Its function is as follows. Lipid transferase that promotes unilocular lipid droplet formation by mediating lipid droplet fusion. Lipid droplet fusion promotes their enlargement, restricting lipolysis and favoring lipid storage. Localizes on the lipid droplet surface, at focal contact sites between lipid droplets, and mediates atypical lipid droplet fusion by promoting directional net neutral lipid transfer from the smaller to larger lipid droplets. The transfer direction may be driven by the internal pressure difference between the contacting lipid droplet pair and occurs at a lower rate than that promoted by CIDEC. May also act as a CEBPB coactivator in epithelial cells to control the expression of a subset of CEBPB downstream target genes, including ID2, IGF1, PRLR, SOCS1, SOCS3, XDH, but not casein. By interacting with CEBPB, strengthens the association of CEBPB with the XDH promoter, increases histone acetylation and dissociates HDAC1 from the promoter. When overexpressed, induces apoptosis; the physiological significance of its role in apoptosis is unclear. The sequence is that of Lipid transferase CIDEA from Mus musculus (Mouse).